We begin with the raw amino-acid sequence, 430 residues long: Protein POLLENLESS 3-LIKE 2 (430 aa).

The segment at 1–21 (MMRDVFRPTKSAPCSPAKPLG) is disordered. TPR repeat units lie at residues 40–73 (DSPY…GDRV), 74–107 (DSAL…CSDQ), 110–143 (ESLD…IQKG), 170–203 (TRLL…APDN), 205–236 (KMCN…VVDG), and 238–257 (RGVD…LNDL). Positions 81–107 (AIVMKQQNRAEEAIEAIKSLRVRCSDQ) form a coiled coil. The tract at residues 346–376 (KLKRTRSSSQGMGMLSGIGGDHEGETNTSTR) is disordered.

Belongs to the MS5 protein family.

Its subcellular location is the nucleus. Functionally, probably involved in the regulation of cell division. The protein is Protein POLLENLESS 3-LIKE 2 of Arabidopsis thaliana (Mouse-ear cress).